The primary structure comprises 340 residues: GTP 3',8-cyclase (340 aa).

Residues 8-227 enclose the Radical SAM core domain; it reads KLGRPIRDLR…TMIEQHFEID (220 aa). A GTP-binding site is contributed by arginine 17. Positions 24 and 28 each coordinate [4Fe-4S] cluster. Tyrosine 30 serves as a coordination point for S-adenosyl-L-methionine. Residue cysteine 31 participates in [4Fe-4S] cluster binding. Arginine 71 provides a ligand contact to GTP. Glycine 75 provides a ligand contact to S-adenosyl-L-methionine. Threonine 102 provides a ligand contact to GTP. An S-adenosyl-L-methionine-binding site is contributed by serine 126. Lysine 163 is a GTP binding site. An S-adenosyl-L-methionine-binding site is contributed by methionine 197. Residues cysteine 261 and cysteine 264 each contribute to the [4Fe-4S] cluster site. 266-268 is a binding site for GTP; sequence RAR. Position 278 (cysteine 278) interacts with [4Fe-4S] cluster.

The protein belongs to the radical SAM superfamily. MoaA family. Monomer and homodimer. [4Fe-4S] cluster serves as cofactor.

It carries out the reaction GTP + AH2 + S-adenosyl-L-methionine = (8S)-3',8-cyclo-7,8-dihydroguanosine 5'-triphosphate + 5'-deoxyadenosine + L-methionine + A + H(+). It participates in cofactor biosynthesis; molybdopterin biosynthesis. Catalyzes the cyclization of GTP to (8S)-3',8-cyclo-7,8-dihydroguanosine 5'-triphosphate. This Staphylococcus aureus (strain MRSA252) protein is GTP 3',8-cyclase.